We begin with the raw amino-acid sequence, 1379 residues long: DNA-directed RNA polymerase subunit beta (1379 aa).

The protein belongs to the RNA polymerase beta chain family. In terms of assembly, the RNAP catalytic core consists of 2 alpha, 1 beta, 1 beta' and 1 omega subunit. When a sigma factor is associated with the core the holoenzyme is formed, which can initiate transcription.

It catalyses the reaction RNA(n) + a ribonucleoside 5'-triphosphate = RNA(n+1) + diphosphate. DNA-dependent RNA polymerase catalyzes the transcription of DNA into RNA using the four ribonucleoside triphosphates as substrates. The protein is DNA-directed RNA polymerase subunit beta of Chelativorans sp. (strain BNC1).